The sequence spans 150 residues: Large ribosomal subunit protein uL15 (150 aa).

Positions 1-15 (MNLSNLQPAEGSTHN) are enriched in polar residues. Residues 1 to 52 (MNLSNLQPAEGSTHNQNKRLGRGEGSGKGGTSARGHKGAKSRSGYSKKIGFE) form a disordered region. The span at 23 to 32 (GEGSGKGGTS) shows a compositional bias: gly residues.

Belongs to the universal ribosomal protein uL15 family. Part of the 50S ribosomal subunit.

Functionally, binds to the 23S rRNA. This chain is Large ribosomal subunit protein uL15, found in Flavobacterium psychrophilum (strain ATCC 49511 / DSM 21280 / CIP 103535 / JIP02/86).